We begin with the raw amino-acid sequence, 296 residues long: Morphine 6-dehydrogenase (296 aa).

13-22 (GVKMPALGLG) serves as a coordination point for NADP(+). The active-site Proton donor is Y52. H110 is a substrate binding site.

Belongs to the aldo/keto reductase family. As to quaternary structure, monomer.

The enzyme catalyses morphine + NAD(+) = morphinone + NADH + H(+). It catalyses the reaction morphine + NADP(+) = morphinone + NADPH + H(+). The protein operates within alkaloid degradation; codeine degradation. It functions in the pathway alkaloid degradation; morphine degradation. Oxidizes only the C-6 hydroxy group of morphine and codeine. The polypeptide is Morphine 6-dehydrogenase (morA) (Pseudomonas putida (Arthrobacter siderocapsulatus)).